The chain runs to 179 residues: Cell division protein SepF (179 aa).

The interval 18 to 57 (EDSTVPYEKGNEPVFTPVNSSQEPDLPMNQPSQSAGAKDS) is disordered. Residues 34-57 (PVNSSQEPDLPMNQPSQSAGAKDS) are compositionally biased toward polar residues.

The protein belongs to the SepF family. As to quaternary structure, homodimer. Interacts with FtsZ.

The protein localises to the cytoplasm. Functionally, cell division protein that is part of the divisome complex and is recruited early to the Z-ring. Probably stimulates Z-ring formation, perhaps through the cross-linking of FtsZ protofilaments. Its function overlaps with FtsA. In Streptococcus pneumoniae (strain Hungary19A-6), this protein is Cell division protein SepF.